Consider the following 212-residue polypeptide: Peroxisomal membrane protein 4 (212 aa).

An N-linked (GlcNAc...) asparagine glycan is attached at Asn57. The next 2 helical transmembrane spans lie at Gly97 to Gly117 and Trp153 to Tyr173. Asn206 carries an N-linked (GlcNAc...) asparagine glycan.

The protein belongs to the peroxisomal membrane protein PXMP2/4 family. In terms of assembly, interacts with PEX19. As to expression, expressed in normal prostate epithelial cells, and androgen-sensitive prostate adenocarcinoma cells. Not expressed in androgen-insensitive prostate adenocarcinoma cells.

It is found in the peroxisome membrane. This Homo sapiens (Human) protein is Peroxisomal membrane protein 4 (PXMP4).